The chain runs to 491 residues: mRNA cleavage and polyadenylation factor clp1 (491 aa).

ATP contacts are provided by glutamate 28 and lysine 78. The segment at 128–160 is disordered; it reads RAAAAQAQQQHPTHHQQQQQGRGAGAGVARSKP. The segment covering 130–148 has biased composition (low complexity); that stretch reads AAAQAQQQHPTHHQQQQQG. 171–176 is an ATP binding site; sequence GVGKTS.

This sequence belongs to the Clp1 family. Clp1 subfamily. In terms of assembly, component of a pre-mRNA cleavage factor complex. Interacts directly with PCF11.

The protein localises to the nucleus. Required for endonucleolytic cleavage during polyadenylation-dependent pre-mRNA 3'-end formation. In Neurospora crassa (strain ATCC 24698 / 74-OR23-1A / CBS 708.71 / DSM 1257 / FGSC 987), this protein is mRNA cleavage and polyadenylation factor clp1 (paa-7).